A 134-amino-acid polypeptide reads, in one-letter code: Cystatin-1 (134 aa).

An N-terminal signal peptide occupies residues 1 to 17; sequence MKAIYLILTVLCGFSAS. The Cystatin domain occupies 21 to 116; the sequence is GGWRDKDVDD…CTAIIWTRSW (96 aa). The short motif at 65-69 is the Secondary area of contact element; that stretch reads QVVSG. Cystine bridges form between Cys-83-Cys-96 and Cys-107-Cys-127.

Belongs to the cystatin family. In terms of tissue distribution, expressed by the venom gland.

Its subcellular location is the secreted. Its function is as follows. Inhibits various C1 cysteine proteases. This protein has no toxic activity and its function in the venom is unknown. It may play a role as a housekeeping or regulatory protein. This is Cystatin-1 from Chilobrachys guangxiensis (Chinese earth tiger tarantula).